Reading from the N-terminus, the 125-residue chain is Large ribosomal subunit protein bL12 (125 aa).

This sequence belongs to the bacterial ribosomal protein bL12 family. As to quaternary structure, homodimer. Part of the ribosomal stalk of the 50S ribosomal subunit. Forms a multimeric L10(L12)X complex, where L10 forms an elongated spine to which 2 to 4 L12 dimers bind in a sequential fashion. Binds GTP-bound translation factors.

Forms part of the ribosomal stalk which helps the ribosome interact with GTP-bound translation factors. Is thus essential for accurate translation. This chain is Large ribosomal subunit protein bL12, found in Ruthia magnifica subsp. Calyptogena magnifica.